The primary structure comprises 76 residues: UPF0248 protein MmarC7_1289 (76 aa).

The protein belongs to the UPF0248 family.

This chain is UPF0248 protein MmarC7_1289, found in Methanococcus maripaludis (strain C7 / ATCC BAA-1331).